Consider the following 353-residue polypeptide: D-glycerol 3-phosphate phosphatase (353 aa).

The Nucleophile role is filled by aspartate 14. Mg(2+) is bound by residues aspartate 14, aspartate 16, and aspartate 209. Aspartate 16 (proton donor) is an active-site residue.

The protein belongs to the HAD-like hydrolase superfamily. In terms of assembly, homodimer. Mg(2+) is required as a cofactor. Requires Co(2+) as cofactor. It depends on Mn(2+) as a cofactor.

The enzyme catalyses sn-glycerol 1-phosphate + H2O = glycerol + phosphate. The protein operates within glycerolipid metabolism. Its function is as follows. Dephosphorylates D-glycerol 3-phosphate (sn-glycerol 1-phosphate). Is the final enzyme involved in the recycling/catabolism of glycerophospholipid polar heads. To a lesser extent, is also able to act on glycerol 2-phosphate and D-ribulose 5-phosphate, but cannot use D-glyceraldehyde 3-phosphate, dihydroxyacetone-phosphate, UMP or GMP as substrates. The sequence is that of D-glycerol 3-phosphate phosphatase from Mycobacterium tuberculosis (strain ATCC 25618 / H37Rv).